Here is a 380-residue protein sequence, read N- to C-terminus: Glutamate 5-kinase (380 aa).

Lys15 contacts ATP. Ser59, Asp146, and Asn158 together coordinate substrate. An ATP-binding site is contributed by 178 to 179 (TD). A PUA domain is found at 285 to 363 (RGSVTVDAGA…AEFERLLGYA (79 aa)).

The protein belongs to the glutamate 5-kinase family.

It localises to the cytoplasm. The enzyme catalyses L-glutamate + ATP = L-glutamyl 5-phosphate + ADP. It participates in amino-acid biosynthesis; L-proline biosynthesis; L-glutamate 5-semialdehyde from L-glutamate: step 1/2. Its function is as follows. Catalyzes the transfer of a phosphate group to glutamate to form L-glutamate 5-phosphate. This Acidovorax ebreus (strain TPSY) (Diaphorobacter sp. (strain TPSY)) protein is Glutamate 5-kinase.